Here is a 517-residue protein sequence, read N- to C-terminus: Ribose import ATP-binding protein RbsA (517 aa).

ABC transporter domains follow at residues 11–251 (LEMR…VGRD) and 263–507 (YDPG…ALAT). 43–50 (GENGAGKS) contributes to the ATP binding site.

Belongs to the ABC transporter superfamily. Ribose importer (TC 3.A.1.2.1) family. In terms of assembly, the complex is composed of an ATP-binding protein (RbsA), two transmembrane proteins (RbsC) and a solute-binding protein (RbsB).

The protein localises to the cell inner membrane. It carries out the reaction D-ribose(out) + ATP + H2O = D-ribose(in) + ADP + phosphate + H(+). Part of the ABC transporter complex RbsABC involved in ribose import. Responsible for energy coupling to the transport system. The protein is Ribose import ATP-binding protein RbsA of Burkholderia pseudomallei (strain K96243).